Here is a 454-residue protein sequence, read N- to C-terminus: DNA repair protein RadA (454 aa).

A C4-type zinc finger spans residues 11-28 (CTECGTHSPKWLGQCSGC). 94-101 (GEPGIGKS) is a binding site for ATP. A RadA KNRFG motif motif is present at residues 251-255 (KNRFG). The tract at residues 350–454 (DVFLSIAGGL…TIKDAVRLLQ (105 aa)) is lon-protease-like.

It belongs to the RecA family. RadA subfamily.

Functionally, DNA-dependent ATPase involved in processing of recombination intermediates, plays a role in repairing DNA breaks. Stimulates the branch migration of RecA-mediated strand transfer reactions, allowing the 3' invading strand to extend heteroduplex DNA faster. Binds ssDNA in the presence of ADP but not other nucleotides, has ATPase activity that is stimulated by ssDNA and various branched DNA structures, but inhibited by SSB. Does not have RecA's homology-searching function. The sequence is that of DNA repair protein RadA from Chlamydia trachomatis serovar D (strain ATCC VR-885 / DSM 19411 / UW-3/Cx).